The primary structure comprises 380 residues: S-adenosylmethionine:tRNA ribosyltransferase-isomerase (380 aa).

Basic and acidic residues predominate over residues 1–15 (MHSKHPTDTARRCET). Residues 1–24 (MHSKHPTDTARRCETGTDSSDTAA) form a disordered region.

The protein belongs to the QueA family. As to quaternary structure, monomer.

The protein resides in the cytoplasm. The catalysed reaction is 7-aminomethyl-7-carbaguanosine(34) in tRNA + S-adenosyl-L-methionine = epoxyqueuosine(34) in tRNA + adenine + L-methionine + 2 H(+). It participates in tRNA modification; tRNA-queuosine biosynthesis. Functionally, transfers and isomerizes the ribose moiety from AdoMet to the 7-aminomethyl group of 7-deazaguanine (preQ1-tRNA) to give epoxyqueuosine (oQ-tRNA). The sequence is that of S-adenosylmethionine:tRNA ribosyltransferase-isomerase from Oleidesulfovibrio alaskensis (strain ATCC BAA-1058 / DSM 17464 / G20) (Desulfovibrio alaskensis).